A 67-amino-acid polypeptide reads, in one-letter code: Large ribosomal subunit protein uL30 (67 aa).

The protein belongs to the universal ribosomal protein uL30 family. Part of the 50S ribosomal subunit.

The chain is Large ribosomal subunit protein uL30 from Thermotoga maritima (strain ATCC 43589 / DSM 3109 / JCM 10099 / NBRC 100826 / MSB8).